Reading from the N-terminus, the 488-residue chain is V-type proton ATPase subunit B 1 (488 aa).

The protein belongs to the ATPase alpha/beta chains family. V-ATPase is a heteromultimeric enzyme composed of a peripheral catalytic V1 complex (main components: subunits A, B, C, D, E, and F) attached to an integral membrane V0 proton pore complex (main component: the proteolipid protein).

Its function is as follows. Non-catalytic subunit of the peripheral V1 complex of vacuolar ATPase. V-ATPase is responsible for acidifying a variety of intracellular compartments in eukaryotic cells. The protein is V-type proton ATPase subunit B 1 of Gossypium hirsutum (Upland cotton).